A 496-amino-acid polypeptide reads, in one-letter code: MKYILSIDQGTTSSRAIIFDRNANIKGFAQKDFKQIYPHPSWVEHNPNEIWSSLLEIISEALANARTHPNEIATIGITNQRETTIIWDRYTGQPIYNAIVWQDRRTAKICDELKTQGKDKIFLEKTGLVLDPYFSGTKIKWILDNVSQARERAEKGELCFGTIDTWIIWNLTKGKIHITDYSNASRTLLLNINSLNWDDDLLQILNIPKSILPELKQSSEIYGKIDSSIMGTEINISGIAGDQFAATFGQSCLQKGMAKNTYGTGCFTTVNIGHKPIINEQKILTSIAWVKKNITTYVFEGSIFIGGAVIQWLRDNLELFKKSSDAEILAASVNNNGGIYFVPAFVGLGTPHWDPYARGTIIGLTRSSTKEHITRAALESIAFQSFDVLTEMKNSIKGFDIKELRVDGKASQNNLLMQFQADILQCNVVRPKITETTALGAAYLAGLAIGYWENTEEITSLWKSDKIFEPLMKQSQREDLIYNWHKAINRAKSWIE.

Thr-11 contributes to the ADP binding site. Thr-11, Thr-12, and Ser-13 together coordinate ATP. Thr-11 provides a ligand contact to sn-glycerol 3-phosphate. Arg-15 contributes to the ADP binding site. Sn-glycerol 3-phosphate is bound by residues Arg-81, Glu-82, Tyr-133, and Asp-242. Residues Arg-81, Glu-82, Tyr-133, Asp-242, and Gln-243 each coordinate glycerol. Residues Thr-264 and Gly-307 each contribute to the ADP site. Positions 264, 307, and 311 each coordinate ATP. Asn-413 is a binding site for ADP.

The protein belongs to the FGGY kinase family.

It catalyses the reaction glycerol + ATP = sn-glycerol 3-phosphate + ADP + H(+). Its pathway is polyol metabolism; glycerol degradation via glycerol kinase pathway; sn-glycerol 3-phosphate from glycerol: step 1/1. Its activity is regulated as follows. Inhibited by fructose 1,6-bisphosphate (FBP). Key enzyme in the regulation of glycerol uptake and metabolism. Catalyzes the phosphorylation of glycerol to yield sn-glycerol 3-phosphate. This chain is Glycerol kinase, found in Borrelia duttonii (strain Ly).